Consider the following 323-residue polypeptide: Probable cell division protein WhiA (323 aa).

The segment at residues 275–309 (TLKELGEMLTTGQVSKSGINHRLRKLDQIAERLRS) is a DNA-binding region (H-T-H motif).

It belongs to the WhiA family.

Its function is as follows. Involved in cell division and chromosome segregation. The protein is Probable cell division protein WhiA of Listeria welshimeri serovar 6b (strain ATCC 35897 / DSM 20650 / CCUG 15529 / CIP 8149 / NCTC 11857 / SLCC 5334 / V8).